We begin with the raw amino-acid sequence, 226 residues long: MKKPKVTTQKPKLTYRVNEQIRVPEVRVIFTDGTQKVMPTLEARRMAEERNQDLIEVQPNAAPPVCKFDNLGKLLYKMDKRDKDLKKKQKATTLKELRFHPNTDKHDFDFKTAHLEEFLRKGNRVRATIVFLGRSIIYKDKGLELAERLTERLSIVSNRDGDPKFEGKKLFVYFDPDKKKIDTYERIKAKTSQPFVPLAPLSPEDLIEEPELESESDSDAEPESDN.

The tract at residues 195–226 (FVPLAPLSPEDLIEEPELESESDSDAEPESDN) is disordered. Over residues 205-226 (DLIEEPELESESDSDAEPESDN) the composition is skewed to acidic residues.

It belongs to the IF-3 family. Monomer.

It localises to the cytoplasm. Its function is as follows. IF-3 binds to the 30S ribosomal subunit and shifts the equilibrium between 70S ribosomes and their 50S and 30S subunits in favor of the free subunits, thus enhancing the availability of 30S subunits on which protein synthesis initiation begins. The polypeptide is Translation initiation factor IF-3 (Chlorobium chlorochromatii (strain CaD3)).